Reading from the N-terminus, the 380-residue chain is Tryptophan--tRNA ligase 2 (380 aa).

The short motif at Pro74–His82 is the 'HIGH' region element. Residues Lys249–Ser253 carry the 'KMSKS' region motif.

This sequence belongs to the class-I aminoacyl-tRNA synthetase family.

The protein localises to the cytoplasm. It carries out the reaction tRNA(Trp) + L-tryptophan + ATP = L-tryptophyl-tRNA(Trp) + AMP + diphosphate + H(+). In Halobacterium salinarum (strain ATCC 700922 / JCM 11081 / NRC-1) (Halobacterium halobium), this protein is Tryptophan--tRNA ligase 2.